Here is a 424-residue protein sequence, read N- to C-terminus: Serine--tRNA ligase (424 aa).

Position 231–233 (T231–E233) interacts with L-serine. R262–E264 contributes to the ATP binding site. Position 285 (E285) interacts with L-serine. An ATP-binding site is contributed by E349 to S352. Position 385 (S385) interacts with L-serine.

Belongs to the class-II aminoacyl-tRNA synthetase family. Type-1 seryl-tRNA synthetase subfamily. In terms of assembly, homodimer. The tRNA molecule binds across the dimer.

The protein resides in the cytoplasm. It catalyses the reaction tRNA(Ser) + L-serine + ATP = L-seryl-tRNA(Ser) + AMP + diphosphate + H(+). It carries out the reaction tRNA(Sec) + L-serine + ATP = L-seryl-tRNA(Sec) + AMP + diphosphate + H(+). It participates in aminoacyl-tRNA biosynthesis; selenocysteinyl-tRNA(Sec) biosynthesis; L-seryl-tRNA(Sec) from L-serine and tRNA(Sec): step 1/1. In terms of biological role, catalyzes the attachment of serine to tRNA(Ser). Is also able to aminoacylate tRNA(Sec) with serine, to form the misacylated tRNA L-seryl-tRNA(Sec), which will be further converted into selenocysteinyl-tRNA(Sec). The protein is Serine--tRNA ligase of Bacillus anthracis (strain A0248).